Consider the following 229-residue polypeptide: Urease accessory protein UreF (229 aa).

The protein belongs to the UreF family. As to quaternary structure, ureD, UreF and UreG form a complex that acts as a GTP-hydrolysis-dependent molecular chaperone, activating the urease apoprotein by helping to assemble the nickel containing metallocenter of UreC. The UreE protein probably delivers the nickel.

It is found in the cytoplasm. Required for maturation of urease via the functional incorporation of the urease nickel metallocenter. The sequence is that of Urease accessory protein UreF from Nostoc sp. (strain PCC 7120 / SAG 25.82 / UTEX 2576).